A 207-amino-acid chain; its full sequence is LexA repressor (207 aa).

Positions 28–48 form a DNA-binding region, H-T-H motif; it reads RAEIASRLGFKSANAAEEHLK. Active-site for autocatalytic cleavage activity residues include Ser-124 and Lys-161.

The protein belongs to the peptidase S24 family. In terms of assembly, homodimer.

It catalyses the reaction Hydrolysis of Ala-|-Gly bond in repressor LexA.. In terms of biological role, represses a number of genes involved in the response to DNA damage (SOS response), including recA and lexA. In the presence of single-stranded DNA, RecA interacts with LexA causing an autocatalytic cleavage which disrupts the DNA-binding part of LexA, leading to derepression of the SOS regulon and eventually DNA repair. This Shewanella amazonensis (strain ATCC BAA-1098 / SB2B) protein is LexA repressor.